We begin with the raw amino-acid sequence, 360 residues long: Peptide chain release factor 1 (360 aa).

N5-methylglutamine is present on Gln235.

This sequence belongs to the prokaryotic/mitochondrial release factor family. Post-translationally, methylated by PrmC. Methylation increases the termination efficiency of RF1.

The protein resides in the cytoplasm. Peptide chain release factor 1 directs the termination of translation in response to the peptide chain termination codons UAG and UAA. This Burkholderia thailandensis (strain ATCC 700388 / DSM 13276 / CCUG 48851 / CIP 106301 / E264) protein is Peptide chain release factor 1.